Consider the following 458-residue polypeptide: D-inositol 3-phosphate glycosyltransferase (458 aa).

1D-myo-inositol 3-phosphate is bound at residue histidine 16. Residues 22–23 and glycine 30 each bind UDP-N-acetyl-alpha-D-glucosamine; that span reads QP. 1D-myo-inositol 3-phosphate-binding positions include 27 to 32, lysine 85, tyrosine 118, threonine 142, and arginine 162; that span reads DAGGMN. UDP-N-acetyl-alpha-D-glucosamine is bound by residues arginine 236, lysine 241, and glutamine 302. Mg(2+) contacts are provided by tyrosine 311, arginine 312, and serine 314. Residues glutamate 324 and glutamate 332 each coordinate UDP-N-acetyl-alpha-D-glucosamine. Threonine 338 contributes to the Mg(2+) binding site. The segment at 428 to 458 is disordered; sequence VAAQNVTGSSSRTRRPWRRRRSTLLPMTGRS. Over residues 439–449 the composition is skewed to basic residues; that stretch reads RTRRPWRRRRS.

It belongs to the glycosyltransferase group 1 family. MshA subfamily. In terms of assembly, homodimer.

The enzyme catalyses 1D-myo-inositol 3-phosphate + UDP-N-acetyl-alpha-D-glucosamine = 1D-myo-inositol 2-acetamido-2-deoxy-alpha-D-glucopyranoside 3-phosphate + UDP + H(+). Functionally, catalyzes the transfer of a N-acetyl-glucosamine moiety to 1D-myo-inositol 3-phosphate to produce 1D-myo-inositol 2-acetamido-2-deoxy-glucopyranoside 3-phosphate in the mycothiol biosynthesis pathway. The polypeptide is D-inositol 3-phosphate glycosyltransferase (Gordonia bronchialis (strain ATCC 25592 / DSM 43247 / BCRC 13721 / JCM 3198 / KCTC 3076 / NBRC 16047 / NCTC 10667) (Rhodococcus bronchialis)).